The primary structure comprises 145 residues: Cuticle protein 7 (145 aa).

Residues Pro41 to Pro114 form the Chitin-binding type R&amp;R domain.

The protein is Cuticle protein 7 of Blaberus craniifer (Death's head cockroach).